The chain runs to 352 residues: Serine protease 55 (352 aa).

An N-terminal signal peptide occupies residues 1–18 (MLLFSVLLLLSLVTGTQL). A Peptidase S1 domain is found at 68–300 (ITGGMEAEVG…YNLWIEKVTQ (233 aa)). A disulfide bridge links cysteine 93 with cysteine 109. Active-site charge relay system residues include histidine 108 and aspartate 156. Cystine bridges form between cysteine 189–cysteine 256, cysteine 222–cysteine 235, and cysteine 246–cysteine 276. A glycan (N-linked (GlcNAc...) asparagine) is linked at asparagine 240. The Charge relay system role is filled by serine 250. Positions 308–330 (AEKRRTSVKQKPMGSPVSGVPEP) are disordered. Residues 319–330 (PMGSPVSGVPEP) are compositionally biased toward low complexity. A lipid anchor (GPI-anchor amidated serine) is attached at serine 325. Residues 326–352 (GVPEPGSPRSWLLLCPLSHVLFRAILY) constitute a propeptide, removed in mature form.

This sequence belongs to the peptidase S1 family. Only detected in testis. Expressed in spermatogonia, spermatocytes, spermatids, Leydig and Sertoli cells. Expressed in prostate cancer and ovarian cancer (at protein level).

The protein localises to the cell membrane. It localises to the cytoplasm. The protein resides in the cytosol. Probable serine protease, which plays a crucial role in the fertility of male mice including sperm migration and sperm-egg interaction. This chain is Serine protease 55 (PRSS55), found in Homo sapiens (Human).